Consider the following 855-residue polypeptide: Inactive rhomboid protein 1 (855 aa).

Residues 1–35 (MSEARRDSTSSLQRKKPPWLKLDIPSAAPATAEEP) form a disordered region. The Cytoplasmic segment spans residues 1 to 411 (MSEARRDSTS…HRPFFTYWLT (411 aa)). Residues 25-35 (PSAAPATAEEP) are compositionally biased toward low complexity. Phosphoserine is present on residues S76 and S176. Phosphothreonine occurs at positions 180 and 183. S390 carries the phosphoserine modification. Residues 412–432 (FVHSLVTILAVCIYGIAPVGF) form a helical membrane-spanning segment. Topologically, residues 433-655 (SQHETVDSVL…NPEVPDQFYR (223 aa)) are lumenal. An N-linked (GlcNAc...) asparagine glycan is attached at N583. The helical transmembrane segment at 656 to 676 (LWLSLFLHAGILHCLVSICFQ) threads the bilayer. Topologically, residues 677–691 (MTVLRDLEKLAGWHR) are cytoplasmic. The helical transmembrane segment at 692-712 (IAIIYLLSGVTGNLASAIFLP) threads the bilayer. The Lumenal portion of the chain corresponds to 713-714 (YR). The helical transmembrane segment at 715–735 (AEVGPAGSQFGILACLFVELF) threads the bilayer. At 736-746 (QSWQILARPWR) the chain is on the cytoplasmic side. Residues 747–767 (AFFKLLAVVLFLFTFGLLPWI) form a helical membrane-spanning segment. Residues 768-772 (DNFAH) are Lumenal-facing. The helical transmembrane segment at 773-793 (ISGFISGLFLSFAFLPYISFG) threads the bilayer. Topologically, residues 794 to 803 (KFDLYRKRCQ) are cytoplasmic. Residues 804 to 824 (IIVFQVVFLGLLAGLVVLFYV) traverse the membrane as a helical segment. Topologically, residues 825 to 855 (YPVRCEWCEFLTCIPFTDKFCEKYELDAQLH) are lumenal.

The protein belongs to the peptidase S54 family. As to quaternary structure, homodimer, or homooligomer. Interacts with TGFA and HBEGF. Interacts with EGF; may retain EGF in the endoplasmic reticulum and regulates its degradation through the endoplasmic reticulum-associated degradation (ERAD). Interacts (via cytoplasmic N-terminus) with FRMD8/iTAP; this interaction leads to mutual protein stabilization. Interacts with ADAM17/TACE.

The protein localises to the endoplasmic reticulum membrane. The protein resides in the golgi apparatus membrane. Functionally, regulates ADAM17 protease, a sheddase of the epidermal growth factor (EGF) receptor ligands and TNF, thereby plays a role in sleep, cell survival, proliferation, migration and inflammation. Does not exhibit any protease activity on its own. This is Inactive rhomboid protein 1 (RHBDF1) from Callithrix jacchus (White-tufted-ear marmoset).